The primary structure comprises 488 residues: Glycogen synthase (488 aa).

Arginine 20 lines the ADP-alpha-D-glucose pocket.

It belongs to the glycosyltransferase 1 family. Bacterial/plant glycogen synthase subfamily.

The enzyme catalyses [(1-&gt;4)-alpha-D-glucosyl](n) + ADP-alpha-D-glucose = [(1-&gt;4)-alpha-D-glucosyl](n+1) + ADP + H(+). Its pathway is glycan biosynthesis; glycogen biosynthesis. Its function is as follows. Synthesizes alpha-1,4-glucan chains using ADP-glucose. The chain is Glycogen synthase from Chlorobaculum parvum (strain DSM 263 / NCIMB 8327) (Chlorobium vibrioforme subsp. thiosulfatophilum).